A 220-amino-acid polypeptide reads, in one-letter code: Recombination protein RecR (220 aa).

The C4-type zinc-finger motif lies at 57 to 72; the sequence is CPICFNITDAEKCDVC. The 94-residue stretch at 80–173 folds into the Toprim domain; that stretch reads RTICVVEEPG…AISRIAYGVP (94 aa). Positions 190 to 220 are disordered; that stretch reads LTGRQTVSKPQPPQRPGDEDGADGAAVPASR.

This sequence belongs to the RecR family.

In terms of biological role, may play a role in DNA repair. It seems to be involved in an RecBC-independent recombinational process of DNA repair. It may act with RecF and RecO. This is Recombination protein RecR from Deinococcus radiodurans (strain ATCC 13939 / DSM 20539 / JCM 16871 / CCUG 27074 / LMG 4051 / NBRC 15346 / NCIMB 9279 / VKM B-1422 / R1).